The chain runs to 133 residues: Small ribosomal subunit protein uS8 (133 aa).

This sequence belongs to the universal ribosomal protein uS8 family. As to quaternary structure, part of the 30S ribosomal subunit. Contacts proteins S5 and S12.

Functionally, one of the primary rRNA binding proteins, it binds directly to 16S rRNA central domain where it helps coordinate assembly of the platform of the 30S subunit. This is Small ribosomal subunit protein uS8 from Chlamydia abortus (strain DSM 27085 / S26/3) (Chlamydophila abortus).